The chain runs to 353 residues: Galectin-9 (353 aa).

The 131-residue stretch at 17 to 147 folds into the Galectin 1 domain; sequence FTGPIQGGLQ…CLKLSFITFQ (131 aa). Residues asparagine 47, histidine 60, arginine 64, asparagine 74, and 81–87 each bind a beta-D-galactoside; that span reads WGPEERK. Residues 167–186 form a disordered region; the sequence is QFPRTPKGRKQKTQNFRPAH. Residues 225–353 form the Galectin 2 domain; sequence FYTPIPNGLY…GDIQLTHVQT (129 aa). A beta-D-galactoside is bound by residues histidine 265, arginine 269, threonine 279, and 285–291; that span reads WGQEERS.

In terms of assembly, homodimer. As to expression, accentuated expression in liver and thymus of embryo, detected in embryonic heart, brain, lung, liver, and kidney. Highly expressed in adult thymus, small intestine, and liver, and to a lesser extent in lung, kidney, spleen, cardiac, and skeletal muscle. Barely detectable in brain and reticulocyte. Expressed in placenta, uterus and decidua during pregnancy. Expressed in CD4+ T-cells with higher levels in iTreg cells than other T-cell types and sustained high levels throughout iTreg cell differentiation (at protein level). Expressed in myeloid cells in lung. Constitutively expressed in microglia. Isoform 1 is expressed exclusively in the small intestine. Isoform 2 expression in decidua increases in pathological pregnancy from gestation day 7.5 to 13.5 and it is higher than in normal pregnancy. Isoform 3 expression in decidua is higher in normal pregnancy than in pathological pregnancy.

It localises to the cytoplasm. The protein localises to the nucleus. The protein resides in the secreted. Functionally, binds galactosides. Has high affinity for the Forssman pentasaccharide. Ligand for HAVCR2/TIM3. Binding to HAVCR2 induces T-helper type 1 lymphocyte (Th1) death. Also stimulates bactericidal activity in infected macrophages by causing macrophage activation and IL1B secretion which restricts intracellular bacterial growth. Ligand for P4HB; the interaction retains P4HB at the cell surface of Th2 T-helper cells, increasing disulfide reductase activity at the plasma membrane, altering the plasma membrane redox state and enhancing cell migration. Ligand for CD44; the interaction enhances binding of SMAD3 to the FOXP3 promoter, leading to up-regulation of FOXP3 expression and increased induced regulatory T (iTreg) cell stability and suppressive function. Promotes ability of mesenchymal stromal cells to suppress T-cell proliferation. Expands regulatory T-cells and induces cytotoxic T-cell apoptosis following virus infection. Activates ERK1/2 phosphorylation inducing cytokine (IL-6, IL-8, IL-12) and chemokine (CCL2) production in mast and dendritic cells. Inhibits degranulation and induces apoptosis of mast cells. Induces maturation and migration of dendritic cells. Inhibits natural killer (NK) cell function. Can transform NK cell phenotype from peripheral to decidual during pregnancy. Astrocyte derived galectin-9 enhances microglial TNF production. May play a role in thymocyte-epithelial interactions relevant to the biology of the thymus. May provide the molecular basis for urate flux across cell membranes, allowing urate that is formed during purine metabolism to efflux from cells and serving as an electrogenic transporter that plays an important role in renal and gastrointestinal urate excretion. Highly selective to the anion urate. In terms of biological role, acts as an eosinophil chemoattractant. It also inhibits angiogenesis. Suppresses IFNG production by natural killer cells. The sequence is that of Galectin-9 (Lgals9) from Mus musculus (Mouse).